A 508-amino-acid polypeptide reads, in one-letter code: ATP synthase subunit alpha, chloroplastic (508 aa).

170 to 177 (GDRQTGKT) serves as a coordination point for ATP.

It belongs to the ATPase alpha/beta chains family. As to quaternary structure, F-type ATPases have 2 components, CF(1) - the catalytic core - and CF(0) - the membrane proton channel. CF(1) has five subunits: alpha(3), beta(3), gamma(1), delta(1), epsilon(1). CF(0) has four main subunits: a, b, b' and c.

Its subcellular location is the plastid. The protein resides in the chloroplast thylakoid membrane. It carries out the reaction ATP + H2O + 4 H(+)(in) = ADP + phosphate + 5 H(+)(out). In terms of biological role, produces ATP from ADP in the presence of a proton gradient across the membrane. The alpha chain is a regulatory subunit. The sequence is that of ATP synthase subunit alpha, chloroplastic from Lactuca sativa (Garden lettuce).